A 922-amino-acid polypeptide reads, in one-letter code: Dual serine/threonine and tyrosine protein kinase (922 aa).

Residues 645–899 (PKLGRELGRG…PLLGIVEPSL (255 aa)) form the Protein kinase domain. ATP is bound by residues 651–659 (LGRGQYGVV) and Lys674. The active-site Proton acceptor is the Asp770.

It belongs to the protein kinase superfamily. Ser/Thr protein kinase family.

Its subcellular location is the cytoplasm. It is found in the cell membrane. It localises to the apical cell membrane. The protein resides in the basolateral cell membrane. The protein localises to the cell junction. It catalyses the reaction L-seryl-[protein] + ATP = O-phospho-L-seryl-[protein] + ADP + H(+). The catalysed reaction is L-threonyl-[protein] + ATP = O-phospho-L-threonyl-[protein] + ADP + H(+). The enzyme catalyses L-tyrosyl-[protein] + ATP = O-phospho-L-tyrosyl-[protein] + ADP + H(+). In terms of biological role, may act as a positive regulator of ERK phosphorylation downstream of fibroblast growth factor-receptor activation. May induce both caspase-dependent apoptosis and caspase-independent cell death. May play a role in the embryonic development. The polypeptide is Dual serine/threonine and tyrosine protein kinase (Tetraodon nigroviridis (Spotted green pufferfish)).